The sequence spans 30 residues: Natriuretic peptides A (30 aa).

The propeptide occupies alanine 1–arginine 3. Cysteines 11 and 27 form a disulfide.

Belongs to the natriuretic peptide family. In terms of processing, cleaved upon secretion to produce the functional hormone.

The protein localises to the secreted. In terms of biological role, hormone playing a key role in cardiovascular homeostasis through regulation of natriuresis, diuresis, and vasodilation. Has a cGMP-stimulating activity. This is Natriuretic peptides A from Pelophylax ridibundus (Marsh frog).